The following is a 62-amino-acid chain: MTTNRVDPLEQTSPNTPTSKREKAKIYGKKLVDSAKIGAKTLSNAYKVTIGTIEVVGPGSDF.

Residues 1–18 (MTTNRVDPLEQTSPNTPT) show a composition bias toward polar residues. Positions 1–24 (MTTNRVDPLEQTSPNTPTSKREKA) are disordered.

This is an uncharacterized protein from Rickettsia conorii (strain ATCC VR-613 / Malish 7).